Consider the following 164-residue polypeptide: SsrA-binding protein (164 aa).

The interval 141 to 164 (KLHDKRQDEKQKSIKKEINSALKR) is disordered. Basic and acidic residues predominate over residues 145-158 (KRQDEKQKSIKKEI).

This sequence belongs to the SmpB family.

It is found in the cytoplasm. Functionally, required for rescue of stalled ribosomes mediated by trans-translation. Binds to transfer-messenger RNA (tmRNA), required for stable association of tmRNA with ribosomes. tmRNA and SmpB together mimic tRNA shape, replacing the anticodon stem-loop with SmpB. tmRNA is encoded by the ssrA gene; the 2 termini fold to resemble tRNA(Ala) and it encodes a 'tag peptide', a short internal open reading frame. During trans-translation Ala-aminoacylated tmRNA acts like a tRNA, entering the A-site of stalled ribosomes, displacing the stalled mRNA. The ribosome then switches to translate the ORF on the tmRNA; the nascent peptide is terminated with the 'tag peptide' encoded by the tmRNA and targeted for degradation. The ribosome is freed to recommence translation, which seems to be the essential function of trans-translation. This is SsrA-binding protein from Prochlorococcus marinus (strain MIT 9301).